A 363-amino-acid chain; its full sequence is Putative transcriptional activator MSA2 (363 aa).

Positions 1–20 (MVYTTPQQQQRFSSTPQSSH) are disordered. Phosphoserine occurs at positions 157 and 292.

Interacts with transcription complexes SCB-binding factor (SBF) and MCB-binding factor (MBF). Interacts with SWI4.

This is Putative transcriptional activator MSA2 (MSA2) from Saccharomyces cerevisiae (strain ATCC 204508 / S288c) (Baker's yeast).